The primary structure comprises 344 residues: Phosphoribosylformylglycinamidine cyclo-ligase (344 aa).

It belongs to the AIR synthase family.

It is found in the cytoplasm. The enzyme catalyses 2-formamido-N(1)-(5-O-phospho-beta-D-ribosyl)acetamidine + ATP = 5-amino-1-(5-phospho-beta-D-ribosyl)imidazole + ADP + phosphate + H(+). It participates in purine metabolism; IMP biosynthesis via de novo pathway; 5-amino-1-(5-phospho-D-ribosyl)imidazole from N(2)-formyl-N(1)-(5-phospho-D-ribosyl)glycinamide: step 2/2. The chain is Phosphoribosylformylglycinamidine cyclo-ligase from Bifidobacterium animalis subsp. lactis (strain AD011).